Here is a 508-residue protein sequence, read N- to C-terminus: Pentatricopeptide repeat-containing protein At3g04130, mitochondrial (508 aa).

A mitochondrion-targeting transit peptide spans 1-74 (MSWLIQNRIG…DSEDDVFKRL (74 aa)). PPR repeat units follow at residues 120–150 (SSDA…MRGD), 154–188 (TLNT…GLEK), 189–219 (NTES…LKSH), 223–257 (NAHT…GFRP), 258–292 (CVIS…GSPP), 293–327 (NSIT…GCKP), 328–363 (DSLF…GVSI), 364–398 (NTST…NLCN), 400–434 (DVHT…HHLS), and 436–470 (DEST…DITP).

The protein belongs to the PPR family. P subfamily.

The protein resides in the mitochondrion. The chain is Pentatricopeptide repeat-containing protein At3g04130, mitochondrial from Arabidopsis thaliana (Mouse-ear cress).